The following is a 430-amino-acid chain: Adenylosuccinate synthetase (430 aa).

GTP-binding positions include 12–18 (GDEGKGK) and 40–42 (GHT). Catalysis depends on D13, which acts as the Proton acceptor. Mg(2+)-binding residues include D13 and G40. Residues 13 to 16 (DEGK), 38 to 41 (NAGH), T128, R142, Q223, T238, and R302 each bind IMP. H41 functions as the Proton donor in the catalytic mechanism. 298–304 (TTTGRPR) serves as a coordination point for substrate. GTP-binding positions include R304, 330-332 (SID), and 412-414 (SVG).

It belongs to the adenylosuccinate synthetase family. In terms of assembly, homodimer. Mg(2+) serves as cofactor.

The protein localises to the cytoplasm. The catalysed reaction is IMP + L-aspartate + GTP = N(6)-(1,2-dicarboxyethyl)-AMP + GDP + phosphate + 2 H(+). Its pathway is purine metabolism; AMP biosynthesis via de novo pathway; AMP from IMP: step 1/2. In terms of biological role, plays an important role in the de novo pathway of purine nucleotide biosynthesis. Catalyzes the first committed step in the biosynthesis of AMP from IMP. The chain is Adenylosuccinate synthetase from Streptococcus uberis (strain ATCC BAA-854 / 0140J).